The following is a 103-amino-acid chain: Pyrimidine/purine nucleoside phosphorylase (103 aa).

This sequence belongs to the nucleoside phosphorylase PpnP family.

It carries out the reaction a purine D-ribonucleoside + phosphate = a purine nucleobase + alpha-D-ribose 1-phosphate. The catalysed reaction is adenosine + phosphate = alpha-D-ribose 1-phosphate + adenine. It catalyses the reaction cytidine + phosphate = cytosine + alpha-D-ribose 1-phosphate. The enzyme catalyses guanosine + phosphate = alpha-D-ribose 1-phosphate + guanine. It carries out the reaction inosine + phosphate = alpha-D-ribose 1-phosphate + hypoxanthine. The catalysed reaction is thymidine + phosphate = 2-deoxy-alpha-D-ribose 1-phosphate + thymine. It catalyses the reaction uridine + phosphate = alpha-D-ribose 1-phosphate + uracil. The enzyme catalyses xanthosine + phosphate = alpha-D-ribose 1-phosphate + xanthine. In terms of biological role, catalyzes the phosphorolysis of diverse nucleosides, yielding D-ribose 1-phosphate and the respective free bases. Can use uridine, adenosine, guanosine, cytidine, thymidine, inosine and xanthosine as substrates. Also catalyzes the reverse reactions. The protein is Pyrimidine/purine nucleoside phosphorylase of Sulfurovum sp. (strain NBC37-1).